Reading from the N-terminus, the 415-residue chain is Enolase (415 aa).

Gln161 is a (2R)-2-phosphoglycerate binding site. Glu203 functions as the Proton donor in the catalytic mechanism. Positions 240, 281, and 308 each coordinate Mg(2+). Residues Lys333, Arg362, Ser363, and Lys384 each contribute to the (2R)-2-phosphoglycerate site. The active-site Proton acceptor is Lys333.

This sequence belongs to the enolase family. Mg(2+) is required as a cofactor.

It localises to the cytoplasm. Its subcellular location is the secreted. The protein resides in the cell surface. It carries out the reaction (2R)-2-phosphoglycerate = phosphoenolpyruvate + H2O. It functions in the pathway carbohydrate degradation; glycolysis; pyruvate from D-glyceraldehyde 3-phosphate: step 4/5. Catalyzes the reversible conversion of 2-phosphoglycerate (2-PG) into phosphoenolpyruvate (PEP). It is essential for the degradation of carbohydrates via glycolysis. The protein is Enolase of Campylobacter hominis (strain ATCC BAA-381 / DSM 21671 / CCUG 45161 / LMG 19568 / NCTC 13146 / CH001A).